The sequence spans 309 residues: Carbonic anhydrase 4 (309 aa).

The signal sequence occupies residues Met1–Thr17. The region spanning Ser20–His282 is the Alpha-carbonic anhydrase domain. 2 disulfides stabilise this stretch: Cys23/Cys35 and Cys45/Cys226. His87 functions as the Proton donor/acceptor in the catalytic mechanism. The Zn(2+) site is built by His114, His116, and His139. A glycan (N-linked (GlcNAc...) asparagine) is linked at Asn193. Residue Thr222–Thr223 coordinates substrate. Ser281 carries the GPI-anchor amidated serine lipid modification. The propeptide at His282 to His309 is removed in mature form.

The protein belongs to the alpha-carbonic anhydrase family. Interacts with SLC4A4. The cofactor is Zn(2+). The N-terminus is blocked. Post-translationally, glycosylated. Present in kidney and lung. Also particularly abundant in brain, muscle, heart and liver. Not detected in skin or spleen.

The protein resides in the cell membrane. It carries out the reaction hydrogencarbonate + H(+) = CO2 + H2O. Its activity is regulated as follows. Inhibited by acetazolamide. Functionally, catalyzes the reversible hydration of carbon dioxide into bicarbonate and protons and thus is essential to maintaining intracellular and extracellular pH. May stimulate the sodium/bicarbonate transporter activity of SLC4A4 that acts in pH homeostasis. It is essential for acid overload removal from the retina and retina epithelium, and acid release in the choriocapillaris in the choroid. This is Carbonic anhydrase 4 (Ca4) from Rattus norvegicus (Rat).